Reading from the N-terminus, the 244-residue chain is DNA repair protein RecO (244 aa).

Belongs to the RecO family.

In terms of biological role, involved in DNA repair and RecF pathway recombination. The polypeptide is DNA repair protein RecO (Koribacter versatilis (strain Ellin345)).